The primary structure comprises 117 residues: G antigen 1 (117 aa).

The tract at residues 1 to 117 is disordered; it reads MSWRGRSTYY…PEEGEGQSQC (117 aa). Composition is skewed to acidic residues over residues 32–45 and 87–96; these read FSDE…EEGE and ECEDGPDGQE.

The protein belongs to the GAGE family. Expressed in a variety of tumor tissues but not in normal tissues, except testis.

Functionally, antigen, recognized on melanoma by autologous cytolytic T-lymphocytes. The chain is G antigen 1 from Homo sapiens (Human).